The primary structure comprises 536 residues: B3 domain-containing protein Os03g0619800 (536 aa).

Positions 26-119 (MRCFLRRMAA…RYEVLILDSD (94 aa)) form a DNA-binding region, TF-B3 1. The tract at residues 138 to 199 (DKTVDPVDSS…VEPQTPSGSD (62 aa)) is disordered. Composition is skewed to low complexity over residues 145–160 (DSSG…SSRS) and 171–183 (SSSE…SPSG). A DNA-binding region (TF-B3 2) is located at residues 231 to 330 (VAVMKKCNLQ…AFTVHLLQAE (100 aa)). A disordered region spans residues 335-396 (RDGTDVHKIG…SDGPSEPPYI (62 aa)). The span at 344-355 (GSSQNKRNSKMA) shows a compositional bias: polar residues. Residues 372–382 (SNKHGVSHESL) are compositionally biased toward basic and acidic residues. Residues 429–529 (ISKLAGSGGK…TMEVHIISNL (101 aa)) constitute a DNA-binding region (TF-B3 3).

It is found in the nucleus. This is B3 domain-containing protein Os03g0619800 from Oryza sativa subsp. japonica (Rice).